The primary structure comprises 85 residues: Beta-insect depressant toxin Lqh-dprIT3e (85 aa).

The first 21 residues, 1 to 21, serve as a signal peptide directing secretion; that stretch reads MKLLLLLTISASMLIEGLVNA. The LCN-type CS-alpha/beta domain maps to 22–82; it reads DGYIRGGDGC…EWDYETDTCG (61 aa). 4 disulfide bridges follow: cysteine 31-cysteine 81, cysteine 35-cysteine 56, cysteine 42-cysteine 63, and cysteine 46-cysteine 65. The residue at position 82 (glycine 82) is a Glycine amide.

It belongs to the long (4 C-C) scorpion toxin superfamily. Sodium channel inhibitor family. Beta subfamily. In terms of tissue distribution, expressed by the venom gland.

The protein localises to the secreted. In terms of biological role, depressant insect beta-toxins cause a transient contraction paralysis followed by a slow flaccid paralysis. They bind voltage-independently at site-4 of sodium channels (Nav) and block action potentials, primarily by depolarizing the axonal membrane and suppressing the sodium current. This depressant toxin is active only on insects. It is found in a relatively small amount in the venom. The polypeptide is Beta-insect depressant toxin Lqh-dprIT3e (Leiurus hebraeus (Hebrew deathstalker scorpion)).